A 474-amino-acid polypeptide reads, in one-letter code: Aspartyl/glutamyl-tRNA(Asn/Gln) amidotransferase subunit B (474 aa).

The protein belongs to the GatB/GatE family. GatB subfamily. Heterotrimer of A, B and C subunits.

The catalysed reaction is L-glutamyl-tRNA(Gln) + L-glutamine + ATP + H2O = L-glutaminyl-tRNA(Gln) + L-glutamate + ADP + phosphate + H(+). It catalyses the reaction L-aspartyl-tRNA(Asn) + L-glutamine + ATP + H2O = L-asparaginyl-tRNA(Asn) + L-glutamate + ADP + phosphate + 2 H(+). In terms of biological role, allows the formation of correctly charged Asn-tRNA(Asn) or Gln-tRNA(Gln) through the transamidation of misacylated Asp-tRNA(Asn) or Glu-tRNA(Gln) in organisms which lack either or both of asparaginyl-tRNA or glutaminyl-tRNA synthetases. The reaction takes place in the presence of glutamine and ATP through an activated phospho-Asp-tRNA(Asn) or phospho-Glu-tRNA(Gln). The polypeptide is Aspartyl/glutamyl-tRNA(Asn/Gln) amidotransferase subunit B (Campylobacter curvus (strain 525.92)).